The sequence spans 207 residues: MYSAPSTCTCLCLHFLLLCFQVQVLAAEENVDFRIHVENQTRARDDVSRKQLRLYQLYSRTSGKHIQVLGRRISARGEDGDKYAQLLVETDTFGSQVRIKGKETEFYLCMNRKGKLVGKPDGTSKECVFIEKVLENNYTALMSAKYSGWYVGFTKKGRPRKGPKTRENQQDVHFMKRYPKGQAELQKPFKYTTVTKRSRRIRPTHPG.

The signal sequence occupies residues 1-27; it reads MYSAPSTCTCLCLHFLLLCFQVQVLAA. N-linked (GlcNAc...) asparagine glycosylation occurs at N39. A disulfide bridge links C109 with C127. An N-linked (GlcNAc...) asparagine glycan is attached at N137.

The protein belongs to the heparin-binding growth factors family. In terms of assembly, interacts with FGFR3 and FGFR4.

The protein resides in the secreted. Functionally, plays an important role in the regulation of cell proliferation, cell differentiation and cell migration. Required for normal ossification and bone development. Stimulates hepatic and intestinal proliferation. This Bos taurus (Bovine) protein is Fibroblast growth factor 18 (FGF18).